A 1177-amino-acid polypeptide reads, in one-letter code: DNA-directed RNA polymerase subunit beta (1177 aa).

Positions 1154–1177 are disordered; the sequence is RDTEDDDDHQSADKLNVEVETTKE. The segment covering 1162 to 1177 has biased composition (basic and acidic residues); sequence HQSADKLNVEVETTKE.

Belongs to the RNA polymerase beta chain family. The RNAP catalytic core consists of 2 alpha, 1 beta, 1 beta' and 1 omega subunit. When a sigma factor is associated with the core the holoenzyme is formed, which can initiate transcription.

The catalysed reaction is RNA(n) + a ribonucleoside 5'-triphosphate = RNA(n+1) + diphosphate. In terms of biological role, DNA-dependent RNA polymerase catalyzes the transcription of DNA into RNA using the four ribonucleoside triphosphates as substrates. This Bacillus mycoides (strain KBAB4) (Bacillus weihenstephanensis) protein is DNA-directed RNA polymerase subunit beta.